The chain runs to 84 residues: Beta-defensin 119 (84 aa).

Positions 1 to 21 (MKLLYLFLAILLAIEEPVISG) are cleaved as a signal peptide. 3 disulfide bridges follow: C28/C55, C35/C49, and C39/C56.

The protein belongs to the beta-defensin family.

The protein resides in the secreted. Functionally, has antibacterial activity. This Gorilla gorilla gorilla (Western lowland gorilla) protein is Beta-defensin 119 (DEFB119).